The following is a 700-amino-acid chain: Probable transcription factor FUP6 (700 aa).

2 disordered regions span residues 343-364 (SEAG…NRHS) and 577-624 (FDSV…PLNQ). Polar residues predominate over residues 577–595 (FDSVHSGRDSVSSAMNYQS). Basic and acidic residues predominate over residues 596-607 (DSRKRARLDTES). The span at 608–623 (NPRSSQRNDGSGQPLN) shows a compositional bias: polar residues.

The protein localises to the nucleus. Its function is as follows. Probable transcrition factor; part of the gene cluster that mediates the biosynthesis of the mycotoxin fusaproliferin (FUP) that belongs to the class of bicyclic sesterterpenoids. The chain is Probable transcription factor FUP6 from Fusarium proliferatum (strain ET1) (Orchid endophyte fungus).